A 1132-amino-acid polypeptide reads, in one-letter code: Phytochrome B (1132 aa).

Residues 1-11 (MASGSRTKHSH) are compositionally biased toward basic residues. Positions 1–27 (MASGSRTKHSHQSGQGQVQAQSSGTSN) are disordered. The span at 12–26 (QSGQGQVQAQSSGTS) shows a compositional bias: low complexity. The GAF domain occupies 231 to 409 (DVKLLCDTVV…AFGLQLNMEL (179 aa)). Cys336 is a binding site for phytochromobilin. PAS domains lie at 623–694 (VARE…LRGE) and 757–828 (DYKA…MIVL). The 221-residue stretch at 905–1125 (YLCQEIKSPL…LIILDLPMTR (221 aa)) folds into the Histidine kinase domain.

It belongs to the phytochrome family. As to quaternary structure, homodimer. Contains one covalently linked phytochromobilin chromophore.

In terms of biological role, regulatory photoreceptor which exists in two forms that are reversibly interconvertible by light: the Pr form that absorbs maximally in the red region of the spectrum and the Pfr form that absorbs maximally in the far-red region. Photoconversion of Pr to Pfr induces an array of morphogenic responses, whereas reconversion of Pfr to Pr cancels the induction of those responses. Pfr controls the expression of a number of nuclear genes including those encoding the small subunit of ribulose-bisphosphate carboxylase, chlorophyll A/B binding protein, protochlorophyllide reductase, rRNA, etc. It also controls the expression of its own gene(s) in a negative feedback fashion. The polypeptide is Phytochrome B (PHYB) (Nicotiana tabacum (Common tobacco)).